The sequence spans 186 residues: Large ribosomal subunit protein uL5 (186 aa).

It belongs to the universal ribosomal protein uL5 family. Part of the 50S ribosomal subunit; part of the 5S rRNA/L5/L18/L25 subcomplex. Contacts the 5S rRNA and the P site tRNA. Forms a bridge to the 30S subunit in the 70S ribosome.

This is one of the proteins that bind and probably mediate the attachment of the 5S RNA into the large ribosomal subunit, where it forms part of the central protuberance. In the 70S ribosome it contacts protein S13 of the 30S subunit (bridge B1b), connecting the 2 subunits; this bridge is implicated in subunit movement. Contacts the P site tRNA; the 5S rRNA and some of its associated proteins might help stabilize positioning of ribosome-bound tRNAs. This chain is Large ribosomal subunit protein uL5, found in Mycoplasmopsis synoviae (strain 53) (Mycoplasma synoviae).